The following is a 356-amino-acid chain: Protein pelota homolog (356 aa).

It belongs to the eukaryotic release factor 1 family. Pelota subfamily. In terms of assembly, monomer. It depends on a divalent metal cation as a cofactor.

Its subcellular location is the cytoplasm. In terms of biological role, may function in recognizing stalled ribosomes, interact with stem-loop structures in stalled mRNA molecules, and effect endonucleolytic cleavage of the mRNA. May play a role in the release non-functional ribosomes and degradation of damaged mRNAs. Has endoribonuclease activity. This chain is Protein pelota homolog, found in Pyrococcus abyssi (strain GE5 / Orsay).